The chain runs to 384 residues: Tetraacyldisaccharide 4'-kinase (384 aa).

Residue 72 to 79 (TAGGTGKT) participates in ATP binding.

The protein belongs to the LpxK family.

It catalyses the reaction a lipid A disaccharide + ATP = a lipid IVA + ADP + H(+). It functions in the pathway glycolipid biosynthesis; lipid IV(A) biosynthesis; lipid IV(A) from (3R)-3-hydroxytetradecanoyl-[acyl-carrier-protein] and UDP-N-acetyl-alpha-D-glucosamine: step 6/6. Transfers the gamma-phosphate of ATP to the 4'-position of a tetraacyldisaccharide 1-phosphate intermediate (termed DS-1-P) to form tetraacyldisaccharide 1,4'-bis-phosphate (lipid IVA). The protein is Tetraacyldisaccharide 4'-kinase of Halothermothrix orenii (strain H 168 / OCM 544 / DSM 9562).